The primary structure comprises 1091 residues: TATA element modulatory factor (1091 aa).

Disordered regions lie at residues 42–86 (IPYG…KPVR) and 100–280 (FLSP…DAKS). Polar residues predominate over residues 57–81 (WDTSTWGLNSTSSEPQSPPTASQAI). 4 positions are modified to phosphoserine: Ser73, Ser78, Ser112, and Ser136. 3 stretches are compositionally biased toward low complexity: residues 111–122 (KSPVVSKPPSKS), 131–142 (SSLQESSSPGQS), and 194–211 (SENV…TTST). Ser213 carries the phosphoserine modification. Residues 217–234 (ETKDMALEPKEQKHEDRQ) are compositionally biased toward basic and acidic residues. Low complexity-rich tracts occupy residues 242–253 (VSSFSSGTSTTS) and 264–273 (ISESSASSRQ). A phosphoserine mark is found at Ser324, Ser326, Ser329, Ser334, Ser340, and Ser357. The interaction with Elongin BC complex stretch occupies residues 329 to 338 (SLDSRSVSEI). Residues 360–443 (TPKTKVVEST…NQPKAPPEKE (84 aa)) form a disordered region. The segment covering 368–379 (STEENAEEEEGN) has biased composition (acidic residues). A phosphoserine mark is found at Ser411 and Ser540. 2 coiled-coil regions span residues 443–767 (EDVC…STAR) and 824–894 (IQMS…SQLE). 2 positions are modified to phosphoserine: Ser923 and Ser926. Residue Thr927 is modified to Phosphothreonine. Ser931 carries the phosphoserine modification. Residues 984-1090 (IENLQSQLKL…QIDELLRQRL (107 aa)) are a coiled coil.

Component of the SNF/SWI transcription factor complexes. Interacts with RAB6A. Interacts with TCEB1. Interacts with STAT3 and FER. Interacts with TRNP1; may regulate TRNP1 proteasomal degradation. Phosphorylated by FER.

The protein localises to the cytoplasm. It localises to the nucleus. Its subcellular location is the golgi apparatus membrane. Functionally, potential coactivator of the androgen receptor. May play critical roles in two RAB6-dependent retrograde transport processes: one from endosomes to the Golgi and the other from the Golgi to the ER. Mediates STAT3 degradation. The sequence is that of TATA element modulatory factor (Tmf1) from Mus musculus (Mouse).